The chain runs to 463 residues: Probable glycosyltransferase 3 (463 aa).

The Cytoplasmic segment spans residues 1–24; it reads MAVTGGGRPAVRQQAARGKQMQRT. The helical; Signal-anchor for type II membrane protein transmembrane segment at 25–47 threads the bilayer; it reads FNNVKITLICGFITLLVLRGTVG. Residues 48–463 are Lumenal-facing; it reads INLLTYGVGG…ALKMDAKIES (416 aa). Residues 82–125 are disordered; it reads EIRSDTDDDDDDEEEEPLGVDASTTTTTNSTTTTATAARRRSSN. Positions 87–99 are enriched in acidic residues; that stretch reads TDDDDDDEEEEPL. Positions 103–118 are enriched in low complexity; that stretch reads ASTTTTTNSTTTTATA. N-linked (GlcNAc...) asparagine glycosylation is found at Asn-110, Asn-125, and Asn-442.

The protein belongs to the glycosyltransferase 34 family.

The protein resides in the golgi apparatus membrane. Probable glycosyltransferase that may be involved in the biosynthesis of xyloglucan. The polypeptide is Probable glycosyltransferase 3 (Oryza sativa subsp. japonica (Rice)).